The chain runs to 108 residues: UPF0060 membrane protein Mflv_3127 (108 aa).

The next 4 helical transmembrane spans lie at 7-27, 32-52, 61-81, and 87-107; these read LLFVLAAVLEIGGAWLVWQGF, GWLWVGAGVLALGAYGFVAAF, VLAAYGGVFVAGSLIWGMVAD, and RWDITGAAVCLLGVVLIMYAP.

This sequence belongs to the UPF0060 family.

The protein localises to the cell membrane. The chain is UPF0060 membrane protein Mflv_3127 from Mycolicibacterium gilvum (strain PYR-GCK) (Mycobacterium gilvum (strain PYR-GCK)).